A 306-amino-acid chain; its full sequence is Ribonuclease H2 subunit B (306 aa).

The disordered stretch occupies residues 232-285; it reads LPDLSSPTPEPPVKKRKVSEAPVEAEEDYTKFNSDSKNKKSNSKMTAAQKSLAK. The segment covering 259–269 has biased composition (basic and acidic residues); sequence DYTKFNSDSKN.

Belongs to the RNase H2 subunit B family. In terms of assembly, the RNase H2 complex is a heterotrimer composed of the catalytic subunit rnaseh2a and the non-catalytic subunits rnaseh2b and rnaseh2c.

Its subcellular location is the nucleus. In terms of biological role, non catalytic subunit of RNase H2, an endonuclease that specifically degrades the RNA of RNA:DNA hybrids. Participates in DNA replication, possibly by mediating the removal of lagging-strand Okazaki fragment RNA primers during DNA replication. Mediates the excision of single ribonucleotides from DNA:RNA duplexes. This Xenopus tropicalis (Western clawed frog) protein is Ribonuclease H2 subunit B (rnaseh2b).